The sequence spans 31 residues: Cytochrome b6-f complex subunit 6 (31 aa).

Residues 3-23 traverse the membrane as a helical segment; sequence ILIGYIILLACAFGLAAGLFF.

It belongs to the PetL family. In terms of assembly, the 4 large subunits of the cytochrome b6-f complex are cytochrome b6, subunit IV (17 kDa polypeptide, PetD), cytochrome f and the Rieske protein, while the 4 small subunits are PetG, PetL, PetM and PetN. The complex functions as a dimer.

The protein localises to the plastid. It localises to the chloroplast thylakoid membrane. Functionally, component of the cytochrome b6-f complex, which mediates electron transfer between photosystem II (PSII) and photosystem I (PSI), cyclic electron flow around PSI, and state transitions. PetL is important for photoautotrophic growth as well as for electron transfer efficiency and stability of the cytochrome b6-f complex. The polypeptide is Cytochrome b6-f complex subunit 6 (Rhodomonas salina (Cryptomonas salina)).